The chain runs to 316 residues: DNA-directed RNA polymerase III subunit RPC6 (316 aa).

Residue Ala2 is modified to N-acetylalanine. Residues Lys5 and Lys7 each participate in a glycyl lysine isopeptide (Lys-Gly) (interchain with G-Cter in SUMO2) cross-link. [4Fe-4S] cluster-binding residues include Cys287, Cys290, Cys296, and Cys307.

This sequence belongs to the eukaryotic RPC34/RPC39 RNA polymerase subunit family. Component of the RNA polymerase III complex consisting of 17 subunits: a ten-subunit horseshoe-shaped catalytic core composed of POLR3A/RPC1, POLR3B/RPC2, POLR1C/RPAC1, POLR1D/RPAC2, POLR3K/RPC10, POLR2E/RPABC1, POLR2F/RPABC2, POLR2H/RPABC3, POLR2K/RPABC4 and POLR2L/RPABC5; a mobile stalk composed of two subunits POLR3H/RPC8 and CRCP/RPC9, protruding from the core and functioning primarily in transcription initiation; and additional subunits homologous to general transcription factors of the RNA polymerase II machinery, POLR3C/RPC3-POLR3F/RPC6-POLR3G/RPC7 heterotrimer required for transcription initiation and POLR3D/RPC4-POLR3E/RPC5 heterodimer involved in both transcription initiation and termination. Directly interacts with POLR3C. Interacts with TBP and TFIIIB90 and GTF3C4. Interacts with MAF1. As part of the RNA polymerase III complex, interacts with PKP2.

It localises to the nucleus. DNA-dependent RNA polymerase catalyzes the transcription of DNA into RNA using the four ribonucleoside triphosphates as substrates. Specific peripheric component of RNA polymerase III (Pol III) which synthesizes small non-coding RNAs including 5S rRNA, snRNAs, tRNAs and miRNAs from at least 500 distinct genomic loci. Part of POLR3C/RPC3-POLR3F/RPC6-POLR3G/RPC7 heterotrimer that coordinates the dynamics of Pol III stalk and clamp modules during the transition from apo to elongation state. Pol III plays a key role in sensing and limiting infection by intracellular bacteria and DNA viruses, including varicella zoster virus. Acts as a nuclear and cytosolic DNA sensor detecting AT-rich DNA, involved in innate immune response. Can sense non-self dsDNA that serves as template for transcription into dsRNA. The non-self RNA polymerase III transcripts, such as Epstein-Barr virus-encoded RNAs (EBERs) induce type I interferon and NF-kappa-B through the RIG-I pathway. Preferentially binds double-stranded DNA (dsDNA). The protein is DNA-directed RNA polymerase III subunit RPC6 of Homo sapiens (Human).